Consider the following 280-residue polypeptide: Large ribosomal subunit protein uL2 (280 aa).

Disordered regions lie at residues 29–58 and 225–280; these read PEKSLLRPLSKTGGRNSHGHITTRHRGGGH and VMNP…NKKR. A compositionally biased stretch (basic residues) spans 45–58; the sequence is SHGHITTRHRGGGH. The segment covering 253–269 has biased composition (basic and acidic residues); the sequence is KEGRTRKPKRYSDDMIV. A compositionally biased stretch (basic residues) spans 270–280; the sequence is RRRRANKNKKR.

Belongs to the universal ribosomal protein uL2 family. As to quaternary structure, part of the 50S ribosomal subunit. Forms a bridge to the 30S subunit in the 70S ribosome.

Functionally, one of the primary rRNA binding proteins. Required for association of the 30S and 50S subunits to form the 70S ribosome, for tRNA binding and peptide bond formation. It has been suggested to have peptidyltransferase activity; this is somewhat controversial. Makes several contacts with the 16S rRNA in the 70S ribosome. This is Large ribosomal subunit protein uL2 from Corynebacterium glutamicum (strain R).